Consider the following 157-residue polypeptide: Endoribonuclease YbeY (157 aa).

Histidine 121, histidine 125, and histidine 131 together coordinate Zn(2+).

It belongs to the endoribonuclease YbeY family. Zn(2+) is required as a cofactor.

The protein resides in the cytoplasm. In terms of biological role, single strand-specific metallo-endoribonuclease involved in late-stage 70S ribosome quality control and in maturation of the 3' terminus of the 16S rRNA. The sequence is that of Endoribonuclease YbeY from Salinispora tropica (strain ATCC BAA-916 / DSM 44818 / JCM 13857 / NBRC 105044 / CNB-440).